Consider the following 429-residue polypeptide: Protein ABERRANT PANICLE ORGANIZATION 1 (429 aa).

Residues 1–11 show a composition bias toward pro residues; the sequence is MMNPRRLPPLP. Positions 1–21 are disordered; that stretch reads MMNPRRLPPLPSSTSSASAAD. Positions 25–71 constitute an F-box domain; it reads PRVWRRLPQPLVDRILACLPTPSFLRLRAACRRFYHLLFSSPFLHSH. A run of 2 helical transmembrane segments spans residues 72 to 92 and 112 to 132; these read LLLS…GHLL and VAGG…LAFL. Kelch repeat units lie at residues 229 to 277, 284 to 339, and 350 to 397; these read MAFA…ELGG, RVAL…AEGG, and YVVL…GAAG.

As to quaternary structure, part of a putative SCF (ASK/Cullin/F-box) ubiquitin ligase complex. Interacts with FL/APO2. In terms of tissue distribution, expressed in apical meristems and the lateral organ primordia throughout development. Expressed in seedlings, roots, leaves, shoot apical meristem (SAM), developing panicles, and, at lower levels, in developing seeds.

It is found in the membrane. It participates in protein modification; protein ubiquitination. Component of SCF(ASK-cullin-F-box) E3 ubiquitin ligase complexes, which may mediate the ubiquitination and subsequent proteasomal degradation of target proteins. Together with FL/APO2, involved in the temporal regulation of meristem identity during both vegetative and reproductive developments in an APO2-dependent manner. Promotes spikelet formation by suppressing the precocious conversion of inflorescence meristems to spikelet meristems, probably via a positive regulation of class-C floral homeotic genes, but not of class-B genes, and through the control of cell proliferation in meristems. Mediates culm development and strength/diameter enhancement at internodes. Required for the regulation of the plastochron, floral organ identity, and floral determinacy. Controls the number of primary rachis branches (PRBs). May trigger the formation of vascular bundle systems which, consequently, promote carbohydrate translocation to panicles. Involved in ozone-induced grain yield regulation. The protein is Protein ABERRANT PANICLE ORGANIZATION 1 of Oryza sativa subsp. japonica (Rice).